A 143-amino-acid polypeptide reads, in one-letter code: Hemoglobin subunit alpha (143 aa).

One can recognise a Globin domain in the interval 2 to 143 (SLTARDKSVV…LSAALADKYR (142 aa)). His-60 lines the O2 pocket. His-89 contacts heme b.

It belongs to the globin family. In terms of assembly, heterotetramer of two alpha chains and two beta chains. As to expression, red blood cells.

In terms of biological role, involved in oxygen transport from gills to the various peripheral tissues. The sequence is that of Hemoglobin subunit alpha (hba) from Salmo salar (Atlantic salmon).